Here is a 336-residue protein sequence, read N- to C-terminus: CENP-A histone chaperone scm3 (336 aa).

The interval 243–269 is disordered; it reads RRRNPLLSSPKTPLRRSFSKSKVRNSN. Residues 255–269 show a composition bias toward basic residues; sequence PLRRSFSKSKVRNSN.

The protein resides in the cytoplasm. It localises to the nucleus. Centromeric protein that plays a central role in the incorporation and maintenance of histone H3-like variant CENPA at centromeres. This is CENP-A histone chaperone scm3 from Schizosaccharomyces pombe (strain 972 / ATCC 24843) (Fission yeast).